Reading from the N-terminus, the 369-residue chain is Short chain dehydrogenase rstn4 (369 aa).

5 residues coordinate NADP(+): Lys-88, Asp-111, Asn-138, Tyr-234, and Lys-238. Tyr-234 serves as the catalytic Proton donor. Lys-238 (lowers pKa of active site Tyr) is an active-site residue.

Belongs to the short-chain dehydrogenases/reductases (SDR) family.

The protein operates within antifungal biosynthesis. Its function is as follows. Short chain dehydrogenase; part of the gene cluster that mediates the biosynthesis of the tetrahydropyranyl antifungal agent restricticin that acts as an inhibitor of CYP51 and blocks the ergosterol biosynthesis. The highly reducing polyketide synthase rstn3, the short chain dehydrogenase rstn4, the cyclase rstn5, the FAD-dependent monooxygenase rstn6 and the enoylreductase rstn7 are required to generate the first stable intermediate desmethylrestrictinol. Rstn3 with rstn7 biosynthesize the first polyketide chain intermediate that is reduced by rstn4, followed by epoxidation by rstn6 before 6-endo cyclization via epoxide opening by rstn5 leads to desmethylrestrictinol. The methyltransferase rstn1 then catalyzes the C4 O-methylation of desmethylrestrictinol to produce restrictinol, and the nonribosomal peptide synthetase rstn8 catalyzes the C3 esterification of restrictinol with glycine that leads to restricticin. In Aspergillus nomiae NRRL (strain ATCC 15546 / NRRL 13137 / CBS 260.88 / M93), this protein is Short chain dehydrogenase rstn4.